The sequence spans 294 residues: MNFQDLMFSLLNYWKDQECLVWQPYDIEKGAGTMNPATFLRALGPEPWNVAYLEPSRRPTDGRYGENPNRLYQHHQIQVIMKPTPDDIQERYLESLQALGINPLEHDIRFVEDNWESPTLGAWGLGWEVWLDGMEITQFTYFQQVGGIDVDKVSCEITYGLERIAMYLQGVENVFDIKWNDQVTYGELFKHAEYEHSKFSFEDSDTEVLFKEFELYEKEAKRLLNQGLVLPGYDYVLKCSHTFNLLDARGAISVTERTGYIGRVRDLARICAKAFLSQREELNYPLLKEGISYA.

It belongs to the class-II aminoacyl-tRNA synthetase family. As to quaternary structure, tetramer of two alpha and two beta subunits.

Its subcellular location is the cytoplasm. It carries out the reaction tRNA(Gly) + glycine + ATP = glycyl-tRNA(Gly) + AMP + diphosphate. This is Glycine--tRNA ligase alpha subunit from Natranaerobius thermophilus (strain ATCC BAA-1301 / DSM 18059 / JW/NM-WN-LF).